A 55-amino-acid polypeptide reads, in one-letter code: MEMKKLIERINFLYKKSKEDGLTEEEKKEQDTLRREYIEIIKGNVKVQLSKVKKI.

Belongs to the UPF0291 family.

It is found in the cytoplasm. The chain is UPF0291 protein CA_C2726 from Clostridium acetobutylicum (strain ATCC 824 / DSM 792 / JCM 1419 / IAM 19013 / LMG 5710 / NBRC 13948 / NRRL B-527 / VKM B-1787 / 2291 / W).